A 549-amino-acid polypeptide reads, in one-letter code: Sphingosine-1-phosphate transporter SPNS2 (549 aa).

Disordered regions lie at residues 14–36 and 78–97; these read AEEE…GAGG and PGCA…PASL. Helical transmembrane passes span 141 to 161, 169 to 189, 202 to 222, 229 to 249, 261 to 281, 320 to 340, 364 to 384, 398 to 418, 422 to 442, 466 to 486, and 507 to 527; these read GLLQ…FGYL, VILS…SFIP, LVGI…GDLF, LMLS…YITG, WALR…LILV, LATS…PLYL, LIFG…GAGA, LVCA…FVAA, IVGA…NWAI, TSHL…SDLI, and LCPF…LFFL.

The protein belongs to the major facilitator superfamily. Spinster (TC 2.A.1.49) family. As to expression, expression is high in the lungs and liver, low in the lymph nodes, spleen and bone marrow, and very low but detectable in the thymus. Not expressed in red blood cells. Also expressed in the inner ear: expressed in the cochlea, both in the lateral wall and organ of Corti.

Its subcellular location is the cell membrane. The protein localises to the endosome membrane. It catalyses the reaction sphing-4-enine 1-phosphate(in) = sphing-4-enine 1-phosphate(out). The enzyme catalyses sphinganine 1-phosphate(in) = sphinganine 1-phosphate(out). Functionally, lipid transporter that specifically mediates export of sphingosine-1-phosphate (sphing-4-enine 1-phosphate, S1P) and sphinganine-1-phosphate in the lymph, thereby playing a role in lymphocyte trafficking. S1P is a bioactive signaling molecule that regulates many physiological processes important for the development and for the immune system. Regulates levels of S1P and the S1P gradient that exists between the high circulating concentrations of S1P and low tissue levels that control lymphocyte trafficking. Required for the egress of T-cells from lymph nodes during an immune response by mediating S1P secretion, which generates a gradient that enables activated T-cells to access lymph. Also required for the egress of immature B-cells from the bone marrow. In contrast, it does not mediate S1P release from red blood cells. Involved in auditory function: S1P release in the inner ear is required for maintenance of the endocochlear potential in the cochlea. In addition to export, also able to mediate S1P import. The polypeptide is Sphingosine-1-phosphate transporter SPNS2 (Mus musculus (Mouse)).